The following is a 400-amino-acid chain: Argininosuccinate synthase (400 aa).

ATP is bound by residues 10-18 (AYSGGVDTS) and A38. Residue Y89 coordinates L-citrulline. An ATP-binding site is contributed by G119. T121, N125, and D126 together coordinate L-aspartate. N125 provides a ligand contact to L-citrulline. Residues R129, S177, S186, E262, and Y274 each contribute to the L-citrulline site.

This sequence belongs to the argininosuccinate synthase family. Type 1 subfamily. Homotetramer.

Its subcellular location is the cytoplasm. It catalyses the reaction L-citrulline + L-aspartate + ATP = 2-(N(omega)-L-arginino)succinate + AMP + diphosphate + H(+). It functions in the pathway amino-acid biosynthesis; L-arginine biosynthesis; L-arginine from L-ornithine and carbamoyl phosphate: step 2/3. This is Argininosuccinate synthase from Crocosphaera subtropica (strain ATCC 51142 / BH68) (Cyanothece sp. (strain ATCC 51142)).